The following is a 337-amino-acid chain: MKIGVLTGGGDAPGLNIAVYTFVKLAERKHEVYAIYHGWRGLLNKEVKRVSSRDLLDFAFSGGTYIRTSRTNPFKDEERARLLESNVKELGLDVVVAIGGDDTLGAAGEAQRRGILDAVGIPKTIDNDVYGTDYTIGFDSAVNAAIEATESFKTTLISHERIGVVEVMGREAGWIALFTGLSTMADAVLIPERPASWDSVAKRVKEAYNERRWALVVVSEGIKEYGGPKDEYGHSRLGGVGNELAEYIERSTGIEARAVVLGHTIRGVPPTAFDRILAVRYATAAYEAVENGRYGVMVAYSNGDIAYVPIVDVVGKNRLVSGYWMRLYETYWPDLAG.

Position 10 (Gly-10) interacts with diphosphate. Asp-101 lines the Mg(2+) pocket. Substrate is bound by residues 124-126 (TID), Arg-161, 168-170 (MGR), Glu-220, Arg-257, and 263-266 (HTIR). The Proton acceptor role is filled by Asp-126.

Belongs to the phosphofructokinase type A (PFKA) family. Mixed-substrate PFK group III subfamily. As to quaternary structure, homodimer or homotrimer. Mg(2+) is required as a cofactor.

It is found in the cytoplasm. It carries out the reaction beta-D-fructose 6-phosphate + diphosphate = beta-D-fructose 1,6-bisphosphate + phosphate + H(+). Its pathway is carbohydrate degradation; glycolysis; D-glyceraldehyde 3-phosphate and glycerone phosphate from D-glucose: step 3/4. With respect to regulation, non-allosteric. Functionally, catalyzes the phosphorylation of D-fructose 6-phosphate, the first committing step of glycolysis. Uses inorganic phosphate (PPi) as phosphoryl donor instead of ATP like common ATP-dependent phosphofructokinases (ATP-PFKs), which renders the reaction reversible, and can thus function both in glycolysis and gluconeogenesis. Consistently, PPi-PFK can replace the enzymes of both the forward (ATP-PFK) and reverse (fructose-bisphosphatase (FBPase)) reactions. This chain is Pyrophosphate--fructose 6-phosphate 1-phosphotransferase, found in Thermoproteus tenax (strain ATCC 35583 / DSM 2078 / JCM 9277 / NBRC 100435 / Kra 1).